The primary structure comprises 147 residues: Hemoglobin subunit beta-1 (147 aa).

Val2 bears the N-acetylvaline mark. The Globin domain maps to 3 to 147; sequence HLTGEEKAAV…VATALAHKYH (145 aa). Position 18 is an N6-succinyllysine (Lys18). At Ser45 the chain carries Phosphoserine. Lys60 is modified (N6-succinyllysine). The heme b site is built by His64 and His93. The residue at position 105 (Arg105) is an Asymmetric dimethylarginine. Thr124 carries the post-translational modification Phosphothreonine.

It belongs to the globin family. In terms of assembly, hb1 is a heterotetramer of two alpha chains and two beta-1 chains. In terms of tissue distribution, red blood cells.

In terms of biological role, involved in oxygen transport from the lung to the various peripheral tissues. The sequence is that of Hemoglobin subunit beta-1 (HBB1) from Chalinolobus morio (Chocolate-wattled bat).